The sequence spans 77 residues: Beta-defensin 135 (77 aa).

An N-terminal signal peptide occupies residues 1–24; sequence MATRSVLLALVVLNLLFYVPPGRS. 3 cysteine pairs are disulfide-bonded: C37-C64, C44-C58, and C48-C65.

It belongs to the beta-defensin family.

It localises to the secreted. Its function is as follows. Has antibacterial activity. This is Beta-defensin 135 (DEFB135) from Homo sapiens (Human).